A 309-amino-acid chain; its full sequence is Methionyl-tRNA formyltransferase (309 aa).

109–112 (SLLP) serves as a coordination point for (6S)-5,6,7,8-tetrahydrofolate.

Belongs to the Fmt family.

The catalysed reaction is L-methionyl-tRNA(fMet) + (6R)-10-formyltetrahydrofolate = N-formyl-L-methionyl-tRNA(fMet) + (6S)-5,6,7,8-tetrahydrofolate + H(+). Its function is as follows. Attaches a formyl group to the free amino group of methionyl-tRNA(fMet). The formyl group appears to play a dual role in the initiator identity of N-formylmethionyl-tRNA by promoting its recognition by IF2 and preventing the misappropriation of this tRNA by the elongation apparatus. The protein is Methionyl-tRNA formyltransferase of Clostridium perfringens (strain 13 / Type A).